The following is a 326-amino-acid chain: Olfactory receptor 10X1 (326 aa).

The Extracellular portion of the chain corresponds to 1–41; that stretch reads MVLNVYCCFFQISDIQTMKINQTILKEFILVGFSVYPHVQT. N21 carries N-linked (GlcNAc...) asparagine glycosylation. The chain crosses the membrane as a helical span at residues 42 to 62; the sequence is FLFVVFFCLYLLTLAGNLIIM. The Cytoplasmic portion of the chain corresponds to 63-70; that stretch reads GLTWVDRS. A helical transmembrane segment spans residues 71 to 91; it reads LHTPMYLFLSALSFSETCYTL. The Extracellular portion of the chain corresponds to 92 to 115; sequence TIVPKMLEDLLAKDRSISVTGCSL. Cysteines 113 and 205 form a disulfide. A helical membrane pass occupies residues 116 to 136; that stretch reads QMCFFLGLGGTNCIILTLMGY. Over 137-155 the chain is Cytoplasmic; the sequence is DRFLAICNPLRYPLLMTNI. Residues 156-176 form a helical membrane-spanning segment; that stretch reads VCGQLVASACTAGFFISLTET. The Extracellular segment spans residues 177 to 213; that stretch reads ALIFRDSFCRPNLVKHFFCHMLAVIRLSCIDSNHTEF. N209 carries an N-linked (GlcNAc...) asparagine glycan. A helical membrane pass occupies residues 214 to 233; that stretch reads IITLISVSGLLGTLLLIILT. At 234-253 the chain is on the cytoplasmic side; it reads DVFIISTVLRIPSAEGKQKA. Residues 254-274 form a helical membrane-spanning segment; that stretch reads FTTCASHLTVVIIHFGFASIV. The Extracellular portion of the chain corresponds to 275–284; that stretch reads YLKPEASGDD. Residues 285 to 305 traverse the membrane as a helical segment; the sequence is TLIAVPYTVITPFLSPIIFSL. Over 306-326 the chain is Cytoplasmic; it reads RNKDMKNAFRRMMGNTVALKK.

Belongs to the G-protein coupled receptor 1 family.

It localises to the cell membrane. Functionally, odorant receptor. In Homo sapiens (Human), this protein is Olfactory receptor 10X1 (OR10X1).